A 548-amino-acid polypeptide reads, in one-letter code: MSDARVPRIPAALSAPSLNRGVGFTHAQRRRLGLTGRLPSAVLTLDQQAERVWHQLQSLATELGRNLLLEQLHYRHEVLYFKVLADHLPELMPVVYTPTVGEAIQRFSDEYRGQRGLFLSIDEPDEIEEAFNTLGLGPEDVDLIVCTDAEAILGIGDWGVGGIQIAVGKLALYTAGGGVDPRRCLAVSLDVGTDNEQLLADPFYLGNRHARRRGREYDEFVSRYIETAQRLFPRAILHFEDFGPANARKILDTYGTDYCVFNDDMQGTGAVVLAAVYSGLKVTGIPLRDQTIVVFGAGTAGMGIADQIRDAMVADGATLEQAVSQIWPIDRPGLLFDDMDDLRDFQVPYAKNRHQLGVAVGDRVGLSDAIKIASPTILLGCSTVYGAFTKEVVEAMTASCKHPMIFPLSNPTSRMEAIPADVLAWSNGRALLATGSPVAPVEFDETTYVIGQANNVLAFPGIGLGVIVAGARLITRRMLHAAAKAIAHQANPTNPGDSLLPDVQNLRAISTTVAEAVYRAAVQDGVASRTHDDVRQAIVDTMWLPAYD.

Tyr96 functions as the Proton donor in the catalytic mechanism. Lys169 acts as the Proton acceptor in catalysis. Residues Glu240, Asp241, and Asp264 each contribute to the a divalent metal cation site. NAD(+) is bound by residues 297 to 300, Asn410, and Asn455; that span reads AGTA.

Belongs to the malic enzymes family. Requires Mg(2+) as cofactor. Mn(2+) serves as cofactor.

It catalyses the reaction (S)-malate + NAD(+) = pyruvate + CO2 + NADH. The enzyme catalyses oxaloacetate + H(+) = pyruvate + CO2. The chain is Putative malate oxidoreductase [NAD] (mez) from Mycobacterium tuberculosis (strain CDC 1551 / Oshkosh).